The sequence spans 165 residues: Mediator of RNA polymerase II transcription subunit 10 (165 aa).

Disordered regions lie at residues 54-81 (SLHT…DPAL) and 143-165 (LRGE…RERG). Residues 62 to 77 (TASTTAPNQYQSTNPN) show a composition bias toward polar residues.

This sequence belongs to the Mediator complex subunit 10 family. As to quaternary structure, component of the Mediator complex.

It is found in the nucleus. Its function is as follows. Component of the Mediator complex, a coactivator involved in the regulated transcription of nearly all RNA polymerase II-dependent genes. Mediator functions as a bridge to convey information from gene-specific regulatory proteins to the basal RNA polymerase II transcription machinery. Mediator is recruited to promoters by direct interactions with regulatory proteins and serves as a scaffold for the assembly of a functional preinitiation complex with RNA polymerase II and the general transcription factors. This is Mediator of RNA polymerase II transcription subunit 10 (nut2) from Emericella nidulans (strain FGSC A4 / ATCC 38163 / CBS 112.46 / NRRL 194 / M139) (Aspergillus nidulans).